The sequence spans 182 residues: MSEEVGAKRWYAVHTYSGYENKVKKNLEKRVESMNMTEQIFRVVIPEEEETQVKDGKAKTTVKKTFPGYVLVELIMTDESWYVVRNTPGVTGFVGSAGAGSKPNPLLPEEVRFILKQMGLKEKTIDVELEVGEQVRIKSGPFANQVGEVQEIETDKFKLTVLVDMFGRETPVEVEFDQIEKL.

The region spanning valine 131–valine 163 is the KOW domain.

This sequence belongs to the NusG family.

In terms of biological role, participates in transcription elongation, termination and antitermination. This Staphylococcus aureus (strain NCTC 8325 / PS 47) protein is Transcription termination/antitermination protein NusG.